Reading from the N-terminus, the 180-residue chain is Cytokinin-beta-glucosidase 2 (180 aa).

Its function is as follows. Hydrolyzes cytokinin glucosides thus liberating free cytokinins. In Linaria vulgaris (Toadflax), this protein is Cytokinin-beta-glucosidase 2 (ROLC2).